The sequence spans 487 residues: Bifunctional protein GlmU (487 aa).

The interval 1–240 is pyrophosphorylase; that stretch reads MAEVTNCAAI…PEELSGVNDR (240 aa). UDP-N-acetyl-alpha-D-glucosamine is bound by residues 12–15, Lys26, Gln83, and 88–89; these read LAAG and GT. A Mg(2+)-binding site is contributed by Asp113. Residues Gly150, Glu165, Asn180, and Asn238 each contribute to the UDP-N-acetyl-alpha-D-glucosamine site. Asn238 contacts Mg(2+). Residues 241–261 form a linker region; that stretch reads VQLAAAGRLLNRRMVEEAMRG. The interval 262–487 is N-acetyltransferase; sequence GTTIVDPDTT…DAKANDQTTN (226 aa). Residues Arg343 and Lys361 each coordinate UDP-N-acetyl-alpha-D-glucosamine. The active-site Proton acceptor is the His373. The UDP-N-acetyl-alpha-D-glucosamine site is built by Tyr376 and Asn387. Acetyl-CoA contacts are provided by residues Ala390, 396–397, Ser415, and Ala433; that span reads NY. The tract at residues 449 to 487 is disordered; the sequence is SGGKQRNIEGWVQKKRPGTPAAEAAGKAQDAKANDQTTN.

This sequence in the N-terminal section; belongs to the N-acetylglucosamine-1-phosphate uridyltransferase family. In the C-terminal section; belongs to the transferase hexapeptide repeat family. As to quaternary structure, homotrimer. Mg(2+) serves as cofactor.

It localises to the cytoplasm. The catalysed reaction is alpha-D-glucosamine 1-phosphate + acetyl-CoA = N-acetyl-alpha-D-glucosamine 1-phosphate + CoA + H(+). It carries out the reaction N-acetyl-alpha-D-glucosamine 1-phosphate + UTP + H(+) = UDP-N-acetyl-alpha-D-glucosamine + diphosphate. It functions in the pathway nucleotide-sugar biosynthesis; UDP-N-acetyl-alpha-D-glucosamine biosynthesis; N-acetyl-alpha-D-glucosamine 1-phosphate from alpha-D-glucosamine 6-phosphate (route II): step 2/2. Its pathway is nucleotide-sugar biosynthesis; UDP-N-acetyl-alpha-D-glucosamine biosynthesis; UDP-N-acetyl-alpha-D-glucosamine from N-acetyl-alpha-D-glucosamine 1-phosphate: step 1/1. It participates in bacterial outer membrane biogenesis; LPS lipid A biosynthesis. Catalyzes the last two sequential reactions in the de novo biosynthetic pathway for UDP-N-acetylglucosamine (UDP-GlcNAc). The C-terminal domain catalyzes the transfer of acetyl group from acetyl coenzyme A to glucosamine-1-phosphate (GlcN-1-P) to produce N-acetylglucosamine-1-phosphate (GlcNAc-1-P), which is converted into UDP-GlcNAc by the transfer of uridine 5-monophosphate (from uridine 5-triphosphate), a reaction catalyzed by the N-terminal domain. The protein is Bifunctional protein GlmU of Corynebacterium aurimucosum (strain ATCC 700975 / DSM 44827 / CIP 107346 / CN-1) (Corynebacterium nigricans).